The primary structure comprises 255 residues: uncharacterized protein (255 aa).

The protein belongs to the methyltransferase superfamily.

This is an uncharacterized protein from Mycobacterium marinum (strain ATCC BAA-535 / M).